The following is a 212-amino-acid chain: Large ribosomal subunit protein uL1 (212 aa).

Belongs to the universal ribosomal protein uL1 family. Part of the 50S ribosomal subunit.

In terms of biological role, binds directly to 23S rRNA. Probably involved in E site tRNA release. Its function is as follows. Protein L1 is also a translational repressor protein, it controls the translation of its operon by binding to its mRNA. The sequence is that of Large ribosomal subunit protein uL1 from Natronomonas pharaonis (strain ATCC 35678 / DSM 2160 / CIP 103997 / JCM 8858 / NBRC 14720 / NCIMB 2260 / Gabara) (Halobacterium pharaonis).